Reading from the N-terminus, the 726-residue chain is MKSPLPWLKRRLSGRADSEHAQNLIRIIITTLFISYLGWRYQHTHGDTLMATWLILVGELLVSLGLMVAILLRPQVSHTRRLIGMLLDYTCTGAIMAIQGEPASPLYAVCMWVTIGNGLRYGSNYLRAATAMGSLCFLGAILISPYWKANPYLSWGLLLGLIAVPLYFDSLLRAMTRAVREARHANQAKSRFLANMSHEFRTPLNGLSGMTEVLATTRLDAEQKECLNTIQASARSLLSLVEEVLDISAIEAGKIRIDRRDFSLREMIGSVNLILQPQARGRRLEYGTQVADDVPDLLKGDTAHLRQVLLNLVGNAVKFTEHGHVLLRVTRVSGSAEDAVRLRFDVEDTGIGVPMDMRPRLFEAFEQADVGLSRRYEGTGLGTTIAKGLVEAMGGSIGFKENQPSGSVFWFELPMAIGEPLKSSTVRVPTGALVDAPEELESSNIIAFSNPFLRHRARVRSMRMLVADDHEANRMVLQRLLEKAGHKVLCVNGAEQVLDAMAEEDYDAVIVDLHMPGMNGLDMLKQLRVMQASGMRYTPVVVLSADVTPEAIRACEQAGARAFLAKPVVAAKLLDTLADLAVSTRQLATPATTVQVATSFEGVLDSSVLDELAALGMGEEFERQFVRQCLDDAQNCVGDIERDGTCSDWEQLRESAHALRGVASNLGLAQVASSGGELMRMADWQLQAEWRLRLSTLREQLKAGKDALDARVQGVKDGECSPRSNE.

5 helical membrane-spanning segments follow: residues Asn-23–Arg-40, Thr-52–Leu-72, Ile-95–Ile-115, Ala-128–Lys-148, and Tyr-152–Leu-172. The region spanning Asn-195 to Ile-417 is the Histidine kinase domain. At His-198 the chain carries Phosphohistidine; by autocatalysis. The region spanning Arg-463–Ala-581 is the Response regulatory domain. At Asp-512 the chain carries 4-aspartylphosphate. An HPt domain is found at Gly-618 to Arg-711. The residue at position 657 (His-657) is a Phosphohistidine.

As to quaternary structure, at low DSF concentrations, interacts with RpfF. Post-translationally, autophosphorylated. Activation may require a sequential transfer of a phosphate group from a His in the primary transmitter domain, to an Asp in the receiver domain and to a His in the secondary transmitter domain.

The protein localises to the cell inner membrane. The catalysed reaction is ATP + protein L-histidine = ADP + protein N-phospho-L-histidine.. Binding of DSF to the sensor region causes allosteric change, which facilitates RpfC autophosphorylation. Functionally, hybrid sensor kinase that regulates diverse biological functions through two distinct molecular mechanisms. At low cell density, the extracellular concentration of the diffusible signaling factor (DSF) is below a threshold, and unphosphorylated RpfC is involved in the negative regulation of DSF synthesis, via direct interaction with the DSF synthase RpfF. Interaction prevents synthesis of DSF, which remains at a basal level. This activity does not involve the phosphorelay mechanism and is not dependent on RpfG. Is also member of the two-component regulatory system RpfG/RpfC, which is involved in the perception and response to DSF, which is essential for cell-cell signaling. At high cell density, the level of extracellular DSF increases and binding of DSF to the sensor region of RpfC causes autophosphorylation of RpfC, which results in the release of RpfF and the activation of RpfG via a four-step phosphorelay. Activation of RpfG leads to the positive regulation of biofilm dispersal and the production of virulence factors. The sequence is that of Sensory/regulatory protein RpfC (rpfC) from Xanthomonas campestris pv. campestris (strain ATCC 33913 / DSM 3586 / NCPPB 528 / LMG 568 / P 25).